The primary structure comprises 590 residues: Aspartate--tRNA ligase (590 aa).

E175 serves as a coordination point for L-aspartate. Residues 199–202 (QIFK) form an aspartate region. L-aspartate is bound at residue R221. ATP contacts are provided by residues 221-223 (RDE) and Q230. H449 serves as a coordination point for L-aspartate. E483 contacts ATP. L-aspartate is bound at residue R490. 535–538 (GLDR) is an ATP binding site.

This sequence belongs to the class-II aminoacyl-tRNA synthetase family. Type 1 subfamily. As to quaternary structure, homodimer.

The protein localises to the cytoplasm. The enzyme catalyses tRNA(Asp) + L-aspartate + ATP = L-aspartyl-tRNA(Asp) + AMP + diphosphate. Catalyzes the attachment of L-aspartate to tRNA(Asp) in a two-step reaction: L-aspartate is first activated by ATP to form Asp-AMP and then transferred to the acceptor end of tRNA(Asp). The protein is Aspartate--tRNA ligase of Geobacillus kaustophilus (strain HTA426).